A 112-amino-acid polypeptide reads, in one-letter code: Probable fatty acid-binding protein (112 aa).

The protein belongs to the calycin superfamily. Fatty-acid binding protein (FABP) family.

The sequence is that of Probable fatty acid-binding protein from Anopheles gambiae (African malaria mosquito).